The chain runs to 832 residues: Spindle pole body component alp6 (832 aa).

The interval 1–186 is interaction with mzt1; it reads MSEIHVKTAL…STETSSVQHT (186 aa). T286 carries the phosphothreonine modification.

It belongs to the TUBGCP family. In terms of assembly, part of the gamma-tubulin complex. Interacts directly with mzt1. Interacts with mto1. Interacts with mto2.

The protein resides in the cytoplasm. It is found in the cytoskeleton. Its subcellular location is the microtubule organizing center. The protein localises to the spindle pole body. Its function is as follows. Component of the gamma tubule complex that is required for the regulation of both interphase microtubules and mitotic bipolar spindles. In Schizosaccharomyces pombe (strain 972 / ATCC 24843) (Fission yeast), this protein is Spindle pole body component alp6 (alp6).